A 1097-amino-acid polypeptide reads, in one-letter code: DNA-directed RNA polymerase subunit beta (1097 aa).

The tract at residues D1073–D1097 is disordered.

The protein belongs to the RNA polymerase beta chain family. In terms of assembly, in cyanobacteria the RNAP catalytic core is composed of 2 alpha, 1 beta, 1 beta', 1 gamma and 1 omega subunit. When a sigma factor is associated with the core the holoenzyme is formed, which can initiate transcription.

The enzyme catalyses RNA(n) + a ribonucleoside 5'-triphosphate = RNA(n+1) + diphosphate. DNA-dependent RNA polymerase catalyzes the transcription of DNA into RNA using the four ribonucleoside triphosphates as substrates. The chain is DNA-directed RNA polymerase subunit beta from Synechococcus sp. (strain RCC307).